Here is a 325-residue protein sequence, read N- to C-terminus: Dimethylallyltranstransferase (325 aa).

Isopentenyl diphosphate contacts are provided by Arg54 and His84. Asp91 and Asp95 together coordinate Mg(2+). Positions 91–95 (DRVVD) match the DDXXD motif motif. Arg101 serves as a coordination point for isopentenyl diphosphate. Positions 217–221 (RDIIA) match the DDXXD motif motif.

Belongs to the FPP/GGPP synthase family. Mg(2+) serves as cofactor.

The enzyme catalyses isopentenyl diphosphate + dimethylallyl diphosphate = (2E)-geranyl diphosphate + diphosphate. It participates in isoprenoid biosynthesis; geranyl diphosphate biosynthesis; geranyl diphosphate from dimethylallyl diphosphate and isopentenyl diphosphate: step 1/1. In terms of biological role, catalyzes the addition of isopentenyl diphosphate (IPP) onto dimethylallyl diphosphate (DMAPP) to form geranyl pyrophosphate (GPP). Is probably involved in the biosynthesis of decaprenyl diphosphate, which is required for mycobacterial cell wall synthesis. Could be required for host endothelial-cell invasion and/or intracellular survival. This chain is Dimethylallyltranstransferase, found in Mycobacterium tuberculosis (strain ATCC 25618 / H37Rv).